The primary structure comprises 856 residues: Paladin (856 aa).

A compositionally biased stretch (low complexity) spans 1 to 16; it reads MGTTASTAQQTVSAGT. Residues 1-29 are disordered; it reads MGTTASTAQQTVSAGTPFEGLQGSGTMDS. Gly2 carries N-myristoyl glycine lipidation. Phosphoserine is present on Ser86.

Belongs to the paladin family. In terms of tissue distribution, expressed in endothelial cells, and in certain larger vessels, in mural cells. In the brain, possibly expressed in microglia. Expressed in peripheral blood mononuclear cells (at protein level).

It localises to the cytoplasm. The protein resides in the cytosol. This is Paladin (PALD1) from Homo sapiens (Human).